We begin with the raw amino-acid sequence, 268 residues long: Malonyl-[acyl-carrier protein] O-methyltransferase 1 (268 aa).

The protein belongs to the methyltransferase superfamily.

The enzyme catalyses malonyl-[ACP] + S-adenosyl-L-methionine = malonyl-[ACP] methyl ester + S-adenosyl-L-homocysteine. Its pathway is cofactor biosynthesis; biotin biosynthesis. Its function is as follows. Converts the free carboxyl group of a malonyl-thioester to its methyl ester by transfer of a methyl group from S-adenosyl-L-methionine (SAM). It allows to synthesize pimeloyl-ACP via the fatty acid synthetic pathway. This is Malonyl-[acyl-carrier protein] O-methyltransferase 1 from Ilyobacter polytropus (strain ATCC 51220 / DSM 2926 / LMG 16218 / CuHBu1).